A 237-amino-acid chain; its full sequence is Phosphoribosylaminoimidazole-succinocarboxamide synthase (237 aa).

The protein belongs to the SAICAR synthetase family.

It carries out the reaction 5-amino-1-(5-phospho-D-ribosyl)imidazole-4-carboxylate + L-aspartate + ATP = (2S)-2-[5-amino-1-(5-phospho-beta-D-ribosyl)imidazole-4-carboxamido]succinate + ADP + phosphate + 2 H(+). The protein operates within purine metabolism; IMP biosynthesis via de novo pathway; 5-amino-1-(5-phospho-D-ribosyl)imidazole-4-carboxamide from 5-amino-1-(5-phospho-D-ribosyl)imidazole-4-carboxylate: step 1/2. This is Phosphoribosylaminoimidazole-succinocarboxamide synthase from Methanosarcina acetivorans (strain ATCC 35395 / DSM 2834 / JCM 12185 / C2A).